A 464-amino-acid polypeptide reads, in one-letter code: NADH-quinone oxidoreductase subunit N (464 aa).

13 helical membrane passes run 5–25, 31–51, 63–83, 96–116, 117–137, 152–172, 188–208, 242–262, 286–303, 312–332, 358–378, 393–415, and 436–456; these read MLLA…VLFL, LLSA…PASL, LFAR…CLLS, EYAA…ASTS, LVSL…LIAV, LLPG…VYAA, GAPM…AAAF, VFAV…RPLL, MLAY…LAVL, AGLF…GLLA, AVLL…AGFM, VGLV…RPVL, and LIFV…GPFF.

Belongs to the complex I subunit 2 family. NDH-1 is composed of 14 different subunits. Subunits NuoA, H, J, K, L, M, N constitute the membrane sector of the complex.

It localises to the cell inner membrane. It catalyses the reaction a quinone + NADH + 5 H(+)(in) = a quinol + NAD(+) + 4 H(+)(out). NDH-1 shuttles electrons from NADH, via FMN and iron-sulfur (Fe-S) centers, to quinones in the respiratory chain. The immediate electron acceptor for the enzyme in this species is believed to be ubiquinone. Couples the redox reaction to proton translocation (for every two electrons transferred, four hydrogen ions are translocated across the cytoplasmic membrane), and thus conserves the redox energy in a proton gradient. The polypeptide is NADH-quinone oxidoreductase subunit N (Syntrophotalea carbinolica (strain DSM 2380 / NBRC 103641 / GraBd1) (Pelobacter carbinolicus)).